We begin with the raw amino-acid sequence, 82 residues long: Consomatin Ro2 (82 aa).

The first 22 residues, Met-1–Gly-22, serve as a signal peptide directing secretion. Residues Gly-23–Arg-57 constitute a propeptide that is removed on maturation. An intrachain disulfide couples Cys-62 to Cys-68. Position 64 is a D-tryptophan (Trp-64). A 4-hydroxyproline mark is found at Pro-69 and Pro-70. Residues Leu-72–Asp-82 constitute a propeptide that is removed on maturation.

Belongs to the conotoxin C superfamily. Consomatin family. As to expression, expressed by the venom duct.

It is found in the secreted. In terms of biological role, moderately activates human somatostatin receptors (SSTR) with a preferential activation of SSTR1 and SSTR4. In vivo, does not cause behavioral changes in mice within a few minutes of intracranial injection, but causes a progressive loss of movement thereafter. Four to five hours after injection, mice recover, even with the highest dose tested. Shows antinociception and antihyperalgesia activities in two mouse models of acute pain, most probably by acting outside the central nervous system. The sequence is that of Consomatin Ro2 from Conus rolani (Cone snail).